A 368-amino-acid polypeptide reads, in one-letter code: Phosphoribosylaminoimidazole-succinocarboxamide synthase (368 aa).

Belongs to the SAICAR synthetase family.

The catalysed reaction is 5-amino-1-(5-phospho-D-ribosyl)imidazole-4-carboxylate + L-aspartate + ATP = (2S)-2-[5-amino-1-(5-phospho-beta-D-ribosyl)imidazole-4-carboxamido]succinate + ADP + phosphate + 2 H(+). The protein operates within purine metabolism; IMP biosynthesis via de novo pathway; 5-amino-1-(5-phospho-D-ribosyl)imidazole-4-carboxamide from 5-amino-1-(5-phospho-D-ribosyl)imidazole-4-carboxylate: step 1/2. The chain is Phosphoribosylaminoimidazole-succinocarboxamide synthase from Vibrio cholerae serotype O1 (strain ATCC 39315 / El Tor Inaba N16961).